A 355-amino-acid polypeptide reads, in one-letter code: Sorbitol dehydrogenase (355 aa).

Ala2 is subject to N-acetylalanine. A Zn(2+)-binding site is contributed by Cys43. Tyr49 provides a ligand contact to substrate. The Zn(2+) site is built by His68 and Glu69. Residue Glu154 coordinates substrate. NAD(+) contacts are provided by residues Ile182, Asp202, Arg207, 271-273 (VGL), and 295-297 (IFR). Substrate contacts are provided by Arg297 and Tyr298.

The protein belongs to the zinc-containing alcohol dehydrogenase family. Homotetramer. Requires Zn(2+) as cofactor. As to expression, expressed in liver.

The protein resides in the mitochondrion membrane. It localises to the cell projection. Its subcellular location is the cilium. It is found in the flagellum. The catalysed reaction is keto-D-fructose + NADH + H(+) = D-sorbitol + NAD(+). Functionally, polyol dehydrogenase that catalyzes the reversible NAD(+)-dependent oxidation of various sugar alcohols. Is active with D-sorbitol (D-glucitol) as substrate, leading to the C2-oxidized product D-fructose. Is a key enzyme in the polyol pathway that interconverts glucose and fructose via sorbitol, which constitutes an important alternate route for glucose metabolism. The chain is Sorbitol dehydrogenase (SORD) from Gallus gallus (Chicken).